A 705-amino-acid polypeptide reads, in one-letter code: Protein artemis (705 aa).

Threonine 380 carries the phosphothreonine modification. Serine 385 is modified (phosphoserine). Acidic residues predominate over residues 451–462; the sequence is EESNSDSGEELE. Disordered regions lie at residues 451–484, 535–569, and 638–675; these read EESN…NADP, PKLC…GWDS, and TLSG…AELP. Low complexity predominate over residues 546 to 559; that stretch reads THISSQNSSQSTHI. The segment covering 560 to 569 has biased composition (polar residues); that stretch reads TDQGSQGWDS. Over residues 652-662 the composition is skewed to low complexity; sequence SSTRADSQSSS. Serine 658 carries the phosphoserine; by ATM modification.

Belongs to the DNA repair metallo-beta-lactamase (DRMBL) family. Interacts with LIG4; the interaction is direct. Interacts with ATM. Interacts with BRCA1. Interacts with PRKDC. Interacts with TP53BP1. Also exhibits ATM- and phosphorylation-dependent interaction with the MRN complex, composed of MRE11, RAD50, and NBN. In terms of processing, phosphorylation on undefined residues by PRKDC may stimulate endonucleolytic activity on 5' and 3' hairpins and overhangs. PRKDC must remain present, even after phosphorylation, for efficient hairpin opening. Also phosphorylated by ATM in response to ionizing radiation (IR) and by ATR in response to ultraviolet (UV) radiation.

It localises to the nucleus. Required for V(D)J recombination, the process by which exons encoding the antigen-binding domains of immunoglobulins and T-cell receptor proteins are assembled from individual V, (D), and J gene segments. V(D)J recombination is initiated by the lymphoid specific RAG endonuclease complex, which generates site specific DNA double strand breaks (DSBs). These DSBs present two types of DNA end structures: hairpin sealed coding ends and phosphorylated blunt signal ends. These ends are independently repaired by the non homologous end joining (NHEJ) pathway to form coding and signal joints respectively. This protein likely exhibits single-strand specific 5'-3' exonuclease activity in isolation, and may acquire endonucleolytic activity on 5' and 3' hairpins and overhangs when in a complex with PRKDC. The latter activity may be required specifically for the resolution of closed hairpins prior to the formation of the coding joint. May also be required for the repair of complex DSBs induced by ionizing radiation, which require substantial end-processing prior to religation by NHEJ. The polypeptide is Protein artemis (Dclre1c) (Mus musculus (Mouse)).